The chain runs to 112 residues: Protein lin-52 homolog (112 aa).

This sequence belongs to the lin-52 family. As to quaternary structure, component of the DREAM complex.

The chain is Protein lin-52 homolog (LIN52) from Gallus gallus (Chicken).